A 1131-amino-acid polypeptide reads, in one-letter code: Chitin synthase 1 (1131 aa).

The span at 1 to 20 (MSDQNNRSRNEYHSNRKNEP) shows a compositional bias: basic and acidic residues. Residues 1 to 22 (MSDQNNRSRNEYHSNRKNEPSY) are disordered. Serine 34, serine 35, serine 270, serine 299, and serine 318 each carry phosphoserine. Residues 282 to 305 (YLHDDSRPVNDGKEELDSVKSGYS) are disordered. A Phosphothreonine modification is found at threonine 328. A Phosphoserine modification is found at serine 358. Transmembrane regions (helical) follow at residues 795 to 815 (FFYL…FFLV), 833 to 853 (VLSV…FILS), 866 to 886 (VLTC…SIFM), 914 to 934 (IVIS…IYLQ), 942 to 962 (FIQY…YAFC), 1042 to 1062 (LVII…LETG), and 1101 to 1121 (ILWL…IYMI).

The protein belongs to the chitin synthase family.

It is found in the cell membrane. The catalysed reaction is [(1-&gt;4)-N-acetyl-beta-D-glucosaminyl](n) + UDP-N-acetyl-alpha-D-glucosamine = [(1-&gt;4)-N-acetyl-beta-D-glucosaminyl](n+1) + UDP + H(+). With respect to regulation, requires proteolytic activation. Polymerizes chitin, a structural polymer of the cell wall and septum, by transferring the sugar moiety of UDP-GlcNAc to the non-reducing end of the growing chitin polymer. Required for mitotic division septum formation during adverse conditions. The sequence is that of Chitin synthase 1 (CHS1) from Saccharomyces cerevisiae (strain ATCC 204508 / S288c) (Baker's yeast).